The following is a 200-amino-acid chain: Probable DNA-directed RNA polymerase subunit delta (200 aa).

Positions Leu19–Trp88 constitute an HTH HARE-type domain. 2 stretches are compositionally biased toward acidic residues: residues Asp125–Glu143 and Tyr150–Glu200. Residues Asp125–Glu200 form a disordered region.

It belongs to the RpoE family. RNAP is composed of a core of 2 alpha, a beta and a beta' subunits. The core is associated with a delta subunit and one of several sigma factors.

Participates in both the initiation and recycling phases of transcription. In the presence of the delta subunit, RNAP displays an increased specificity of transcription, a decreased affinity for nucleic acids, and an increased efficiency of RNA synthesis because of enhanced recycling. In Streptococcus pneumoniae serotype 4 (strain ATCC BAA-334 / TIGR4), this protein is Probable DNA-directed RNA polymerase subunit delta.